Here is a 521-residue protein sequence, read N- to C-terminus: Manganese transporter pdt1 (521 aa).

Serine 42 carries the phosphoserine modification. A Phosphothreonine modification is found at threonine 43. 12 helical membrane passes run 71–91, 104–124, 152–172, 179–199, 210–230, 233–253, 260–280, 325–345, 373–393, 417–437, 440–460, and 495–515; these read YCKFIGPGFLIAVAYIDPGNY, KLLFIVFLSNLFAVYLQSLCI, VLAEIAIIATDIAEVIGTAVA, IPLVAGVVITILDVLLVLIAW, IFETAVALLVLVVAISFAVVL, VHIGGAGTVFKGFLPSSTVFS, SIGILGATVMPHSLFLGSGLV, LFTFALFTNSSILIVAGAVFY, LFAVALLFSGMSAGYVCTIAG, IAIIPCLVVSAAVGQSGLNQV, ASQVCLSILLPFLTFPLVMFT, and IVTWAIWLFLTALNLLLIVWL.

It belongs to the NRAMP family.

It is found in the endoplasmic reticulum membrane. Transports manganese ions into the cell. Regulates cell morphogenesis through control of manganese homeostasis. This is Manganese transporter pdt1 (pdt1) from Schizosaccharomyces pombe (strain 972 / ATCC 24843) (Fission yeast).